The following is a 164-amino-acid chain: uncharacterized protein (164 aa).

Residues 144 to 164 are disordered; the sequence is GFISPEKEHESEDMTSQSLVA.

This is an uncharacterized protein from Synechocystis sp. (strain ATCC 27184 / PCC 6803 / Kazusa).